A 204-amino-acid chain; its full sequence is Cytochrome P450 monooxygenase PC-23 (204 aa).

Cys138 provides a ligand contact to heme.

Belongs to the cytochrome P450 family. Heme serves as cofactor.

The protein operates within secondary metabolite biosynthesis. Its function is as follows. Cytochrome P450 monooxygenase; part of the gene cluster that mediates the biosynthesis of the indole diterpenes penitrems. The geranylgeranyl diphosphate (GGPP) synthase penG catalyzes the first step in penitrem biosynthesis via conversion of farnesyl pyrophosphate and isopentyl pyrophosphate into geranylgeranyl pyrophosphate (GGPP). Condensation of indole-3-glycerol phosphate with GGPP by the prenyl transferase penC then forms 3-geranylgeranylindole (3-GGI). Epoxidation by the FAD-dependent monooxygenase penM leads to a epoxidized-GGI that is substrate of the terpene cyclase penB for cyclization to yield paspaline. Paspaline is subsequently converted to 13-desoxypaxilline by the cytochrome P450 monooxygenase penP, the latter being then converted to paxilline by the cytochrome P450 monooxygenase penQ. Paxilline is converted to beta-paxitriol via C-10 ketoreduction by the short-chain dehydrogenase PC-15 which can be monoprenylated at the C-20 by the indole diterpene prenyltransferase penD. A two-step elimination (acetylation and elimination) process performed by the O-acetyltransferase PC-16 and the P.simplicissimum ptmI-ortholog not yet identified in P.crustosum, leads to the production of the prenylated form of penijanthine. The FAD-linked oxidoreductase ptmO then converts the prenylated form of penijanthine into PC-M5 which is in turn transformed into PC-M4 by the aromatic dimethylallyltransferase PC-22. A series of oxidation steps involving 4 cytochrome P450 monooxygenases (PC-21, PC-05, PC-23, PC-20) and a FAD-dependent monooxygenase (PC-14) are required for the transformation of PC-M4 to penitrems A and E. Synthesis of these final products is proposed to proceed via penitrems D and C (PC-21, PC-05, PC-14) and penitrems B and F (PC-21, PC-05, PC-14, PC-23). This Penicillium crustosum (Blue mold fungus) protein is Cytochrome P450 monooxygenase PC-23.